A 405-amino-acid chain; its full sequence is CCA-adding enzyme (405 aa).

Positions 8 and 11 each coordinate ATP. The CTP site is built by Gly-8 and Arg-11. 2 residues coordinate Mg(2+): Glu-21 and Asp-23. 3 residues coordinate ATP: Arg-91, Arg-137, and Arg-140. The CTP site is built by Arg-91, Arg-137, and Arg-140. An HD domain is found at Pro-220–Trp-326.

It belongs to the tRNA nucleotidyltransferase/poly(A) polymerase family. Bacterial CCA-adding enzyme type 2 subfamily. The cofactor is Mg(2+).

It carries out the reaction a tRNA precursor + 2 CTP + ATP = a tRNA with a 3' CCA end + 3 diphosphate. The catalysed reaction is a tRNA with a 3' CCA end + 2 CTP + ATP = a tRNA with a 3' CCACCA end + 3 diphosphate. Functionally, catalyzes the addition and repair of the essential 3'-terminal CCA sequence in tRNAs without using a nucleic acid template. Adds these three nucleotides in the order of C, C, and A to the tRNA nucleotide-73, using CTP and ATP as substrates and producing inorganic pyrophosphate. tRNA 3'-terminal CCA addition is required both for tRNA processing and repair. Also involved in tRNA surveillance by mediating tandem CCA addition to generate a CCACCA at the 3' terminus of unstable tRNAs. While stable tRNAs receive only 3'-terminal CCA, unstable tRNAs are marked with CCACCA and rapidly degraded. This chain is CCA-adding enzyme, found in Hamiltonella defensa subsp. Acyrthosiphon pisum (strain 5AT).